A 1845-amino-acid polypeptide reads, in one-letter code: Collagen alpha-1(XXVII) chain (1845 aa).

Residues 1-39 (MGTGFARGARGTAASGPGGGFLFAWILVSFTCHLASTQG) form the signal peptide. A propeptide spans 40–609 (APEDVDVLQR…LGPTPFPMLM (570 aa)) (N-terminal propeptide). Positions 72–237 (PSGFIFTQRA…NYCAHLRERC (166 aa)) constitute a Laminin G-like domain. N-linked (GlcNAc...) asparagine glycosylation occurs at Asn272. Disordered regions lie at residues 299–478 (TKPL…VPKT), 502–572 (PPLG…RPST), 608–774 (LMGP…MGRP), and 827–1608 (LMGG…HPIQ). Polar residues predominate over residues 312 to 323 (HSSSQTPLSPAK). Composition is skewed to low complexity over residues 327–343 (RKTP…NSTR) and 356–372 (TTTS…SVSP). Asn340 carries N-linked (GlcNAc...) asparagine glycosylation. Residues 429 to 439 (PRPPVPSPQPL) are compositionally biased toward pro residues. Residues 444 to 454 (GLSKKFTNPTV) show a composition bias toward polar residues. The segment covering 554–564 (SARDASPRDLT) has biased composition (basic and acidic residues). Collagen-like domains are found at residues 610–664 (GPPG…GDPG), 673–732 (GAKG…PGPV), 742–801 (GYIG…PGPP), 817–876 (GYPG…PGPL), 877–936 (GKAG…EGPM), 937–996 (GPPG…VGEK), 997–1038 (GDRG…PGSR), 1039–1096 (GLPG…GAKG), 1117–1176 (GSQG…PGLE), 1177–1236 (GDHG…QGEK), and 1240–1299 (GAKG…NGHK). The interval 610–1603 (GPPGSKGDCG…RGRPGPPGPP (994 aa)) is triple-helical. Residues 639-654 (RGPPGPYGNPGPPGPP) are compositionally biased toward pro residues. Composition is skewed to low complexity over residues 677–690 (NMGL…PGPL) and 699–719 (PGAA…SPGA). Residues 865–874 (GLPGGRGKPG) are compositionally biased toward gly residues. A compositionally biased stretch (low complexity) spans 896 to 909 (FPGDIGPPGDNGPE). The segment covering 1018–1027 (GTPGGIGNPG) has biased composition (gly residues). 3 stretches are compositionally biased toward low complexity: residues 1074 to 1086 (RGRP…QGAA), 1112 to 1122 (LPGEPGSQGPQ), and 1152 to 1167 (KGDL…QGLI). Basic and acidic residues-rich tracts occupy residues 1187 to 1212 (LKGD…KGED) and 1226 to 1238 (REGK…EKGQ). Composition is skewed to basic and acidic residues over residues 1311–1323 (KGEK…DGKT) and 1335–1345 (PVGDRGDRGEP). A Collagen-like 12 domain is found at 1325–1384 (GPPGPPGDRGPVGDRGDRGEPGDPGYPGQEGVQGLRGEPGQQGQPGHPGPRGRPGPKGSK). 3 stretches are compositionally biased toward low complexity: residues 1360-1369 (RGEPGQQGQP), 1395-1422 (KAGP…RQGP), and 1438-1465 (PGYQ…PGVA). 3 consecutive Collagen-like domains span residues 1424–1483 (GTAG…SGLP), 1484–1543 (GQLG…KGIQ), and 1544–1603 (GPRG…PGPP). Residues 1557-1572 (IIGPPGMLGPSGLPGP) are compositionally biased toward low complexity. Over residues 1588-1605 (RGPPGPRGRPGPPGPPWH) the composition is skewed to pro residues. A propeptide spans 1607-1845 (IQFQQDDLGA…RLEVGPACFL (239 aa)) (C-terminal propeptide). The 201-residue stretch at 1645–1845 (GEIFKTLHYL…RLEVGPACFL (201 aa)) folds into the Fibrillar collagen NC1 domain. Disulfide bonds link Cys1675-Cys1707, Cys1716-Cys1843, and Cys1752-Cys1796. Asp1693, Asn1695, Cys1698, and Asp1701 together coordinate Ca(2+). A glycan (N-linked (GlcNAc...) asparagine) is linked at Asn1754.

This sequence belongs to the fibrillar collagen family. As to expression, highly expressed in cartilage, eye and ear.

It is found in the secreted. The protein localises to the extracellular space. The protein resides in the extracellular matrix. Its function is as follows. Plays a role during the calcification of cartilage and the transition of cartilage to bone. This is Collagen alpha-1(XXVII) chain (Col27a1) from Mus musculus (Mouse).